The sequence spans 106 residues: Transcription initiation factor IIA subunit 2 (106 aa).

It belongs to the TFIIA subunit 2 family. TFIIA is a heterodimer of the large unprocessed subunit 1 and a small subunit gamma. It was originally believed to be a heterotrimer of an alpha, a beta and a gamma subunit.

It localises to the nucleus. TFIIA is a component of the transcription machinery of RNA polymerase II and plays an important role in transcriptional activation. TFIIA in a complex with TBP mediates transcriptional activity. The chain is Transcription initiation factor IIA subunit 2 (TFIIA-S) from Arabidopsis thaliana (Mouse-ear cress).